Reading from the N-terminus, the 480-residue chain is Alpha-glucosidase (480 aa).

Residue 4–70 (VKIGIIGAGS…ADLKFEKTTS (67 aa)) coordinates NAD(+). Residues aspartate 119 and asparagine 153 each contribute to the substrate site. Cysteine 174 contacts Mn(2+). Residue histidine 175 is the Proton donor of the active site. A Mn(2+)-binding site is contributed by histidine 203. Aspartate 260 acts as the Proton acceptor in catalysis.

Belongs to the glycosyl hydrolase 4 family. As to quaternary structure, homodimer. It depends on NAD(+) as a cofactor. Requires Mn(2+) as cofactor.

It catalyses the reaction Hydrolysis of terminal, non-reducing (1-&gt;4)-linked alpha-D-glucose residues with release of alpha-D-glucose.. Its activity is regulated as follows. Inhibited by EDTA in vitro. Is able to hydrolyze diverse types of alpha-glycoside bonds in di- and trisaccharides: alpha-1,4 bonds of maltose and maltotriose, alpha-1,1 bonds of trehalose, alpha-1,2 bonds of sucrose, alpha-1,3 bonds of turanose and melizitose, alpha-1,6 bonds of isomaltose and melibiose. AglA is not specific with respect to the configuration at the C-4 position of its substrates because it also possesses alpha-galactosidase activity. Acts on the substrate from the non-reducing end of the chain. The activity of AglA drops with increasing length of the saccharide chain. Does not hydrolyze alpha-, beta-, and gamma-cyclodextrins or polysaccharides (starch, pullulan, amylose, amylopectin, glycogen). Does not cleave beta-glycosidic bonds in di-, oligo-, or polysaccharides. This is Alpha-glucosidase (aglA) from Thermotoga neapolitana.